The following is a 245-amino-acid chain: 1-(5-phosphoribosyl)-5-[(5-phosphoribosylamino)methylideneamino] imidazole-4-carboxamide isomerase (245 aa).

D7 serves as the catalytic Proton acceptor. D129 serves as the catalytic Proton donor.

The protein belongs to the HisA/HisF family.

Its subcellular location is the cytoplasm. It carries out the reaction 1-(5-phospho-beta-D-ribosyl)-5-[(5-phospho-beta-D-ribosylamino)methylideneamino]imidazole-4-carboxamide = 5-[(5-phospho-1-deoxy-D-ribulos-1-ylimino)methylamino]-1-(5-phospho-beta-D-ribosyl)imidazole-4-carboxamide. It functions in the pathway amino-acid biosynthesis; L-histidine biosynthesis; L-histidine from 5-phospho-alpha-D-ribose 1-diphosphate: step 4/9. The chain is 1-(5-phosphoribosyl)-5-[(5-phosphoribosylamino)methylideneamino] imidazole-4-carboxamide isomerase from Alteromonas mediterranea (strain DSM 17117 / CIP 110805 / LMG 28347 / Deep ecotype).